The chain runs to 343 residues: Cell division protein ZipA (343 aa).

Over 1 to 4 (MDLN) the chain is Periplasmic. The helical transmembrane segment at 5 to 25 (TILIILGILALIGLVAHGIWS) threads the bilayer. Topologically, residues 26-343 (NRREKSQYFD…MAEAAYLARV (318 aa)) are cytoplasmic. The disordered stretch occupies residues 39-98 (AFHRNPQSTGRPSAQASQPMTPNFAQPAKETEQIRQTYQEPQVRQMSSSPEQQTRPTAQA). Composition is skewed to polar residues over residues 43 to 62 (NPQS…TPNF) and 72 to 95 (IRQT…TRPT).

This sequence belongs to the ZipA family. As to quaternary structure, interacts with FtsZ via their C-terminal domains.

It is found in the cell inner membrane. Essential cell division protein that stabilizes the FtsZ protofilaments by cross-linking them and that serves as a cytoplasmic membrane anchor for the Z ring. Also required for the recruitment to the septal ring of downstream cell division proteins. This chain is Cell division protein ZipA, found in Actinobacillus succinogenes (strain ATCC 55618 / DSM 22257 / CCUG 43843 / 130Z).